A 107-amino-acid polypeptide reads, in one-letter code: Early E3A 12.5 kDa protein (107 aa).

It belongs to the adenoviridae E3A-2 family.

The chain is Early E3A 12.5 kDa protein from Homo sapiens (Human).